The following is a 213-amino-acid chain: Ribosomal RNA small subunit methyltransferase G (213 aa).

S-adenosyl-L-methionine-binding positions include Gly75, Phe80, 128–129 (IE), and Arg144.

The protein belongs to the methyltransferase superfamily. RNA methyltransferase RsmG family.

Its subcellular location is the cytoplasm. The catalysed reaction is guanosine(527) in 16S rRNA + S-adenosyl-L-methionine = N(7)-methylguanosine(527) in 16S rRNA + S-adenosyl-L-homocysteine. Specifically methylates the N7 position of guanine in position 527 of 16S rRNA. The chain is Ribosomal RNA small subunit methyltransferase G from Brucella anthropi (strain ATCC 49188 / DSM 6882 / CCUG 24695 / JCM 21032 / LMG 3331 / NBRC 15819 / NCTC 12168 / Alc 37) (Ochrobactrum anthropi).